The following is a 476-amino-acid chain: Protein transport protein Sec61 subunit alpha isoform B (476 aa).

Residues 2–33 (GIKFLEVIKPFCAVLPEIQKPERKIQFREKVL) are Cytoplasmic-facing. The helical transmembrane segment at 34-53 (WTAITLFIFLVCCQIPLFGI) threads the bilayer. Topologically, residues 54–76 (MSSDSADPFYWMRVILASNRGTL) are lumenal. The helical transmembrane segment at 77-96 (MELGISPIVTSGLIMQLLAG) threads the bilayer. Residues 97–117 (AKIIEVGDTPKDRALFNGAQK) lie on the Cytoplasmic side of the membrane. A helical membrane pass occupies residues 118–138 (LFGMIITIGQAIVYVMTGMYG). The Lumenal portion of the chain corresponds to 139-144 (DPSDMG). A helical membrane pass occupies residues 145–165 (AGICLLIIIQLFVAGLIVLLL). Topologically, residues 166-172 (DELLQKG) are cytoplasmic. A helical membrane pass occupies residues 173–193 (YGLGSGISLFIATNICETIVW). The Lumenal portion of the chain corresponds to 194-240 (KAFSPTTVNTGRGTEFEGAIIALFHLLATRTDKVRALREAFYRQNLP). A helical transmembrane segment spans residues 241–261 (NLMNLLATVFVFGVVIYFQGF). At 262–288 (RVDLPIKSARYRGQYNTYPIKLFYTSN) the chain is on the cytoplasmic side. The helical transmembrane segment at 289 to 309 (IPIILQSALVSNLYVISQMLS) threads the bilayer. At 310 to 354 (TRFSGNFLVNLLGTWSDTSSGGPARAYPVGGLCYYFSPPESFGSV) the chain is on the lumenal side. The helical transmembrane segment at 355-375 (LDDPIHAAIYICFMLGSCAFF) threads the bilayer. The Cytoplasmic portion of the chain corresponds to 376 to 420 (SKTWIEVSGSSAKDVAKQLKEQQMVMRGHRETSMVHELNRYIPTA). A helical transmembrane segment spans residues 421 to 441 (AAFGGLCIGGLSVMADFLGAI). Over 442–445 (GSGT) the chain is Lumenal. The chain crosses the membrane as a helical span at residues 446-462 (GILLAVTIIYQYFEIFV). At 463-476 (KEQSEMGSMGALLF) the chain is on the cytoplasmic side.

This sequence belongs to the SecY/SEC61-alpha family. The SEC61 channel-forming translocon complex consists of channel-forming core components SEC61A1, SEC61B and SEC61G and different auxiliary components such as SEC62 and SEC63.

The protein localises to the endoplasmic reticulum membrane. Its function is as follows. Component of SEC61 channel-forming translocon complex that mediates transport of signal peptide-containing precursor polypeptides across the endoplasmic reticulum (ER). Forms a ribosome receptor and a gated pore in the ER membrane, both functions required for cotranslational translocation of nascent polypeptides. This is Protein transport protein Sec61 subunit alpha isoform B (sec61ab) from Oncorhynchus mykiss (Rainbow trout).